Reading from the N-terminus, the 120-residue chain is uncharacterized protein (120 aa).

This is an uncharacterized protein from Acanthamoeba polyphaga mimivirus (APMV).